The chain runs to 348 residues: Dihydroorotase (348 aa).

The Zn(2+) site is built by His14 and His16. Residues 16–18 (HLR) and Asn42 each bind substrate. Residues Lys100, His137, and His175 each contribute to the Zn(2+) site. Lys100 carries the N6-carboxylysine modification. Position 137 (His137) interacts with substrate. Leu220 lines the substrate pocket. Asp248 serves as a coordination point for Zn(2+). The active site involves Asp248. The substrate site is built by His252 and Ala264.

This sequence belongs to the metallo-dependent hydrolases superfamily. DHOase family. Class II DHOase subfamily. Homodimer. Requires Zn(2+) as cofactor.

It carries out the reaction (S)-dihydroorotate + H2O = N-carbamoyl-L-aspartate + H(+). It participates in pyrimidine metabolism; UMP biosynthesis via de novo pathway; (S)-dihydroorotate from bicarbonate: step 3/3. Functionally, catalyzes the reversible cyclization of carbamoyl aspartate to dihydroorotate. The chain is Dihydroorotase from Pseudomonas putida (strain ATCC 700007 / DSM 6899 / JCM 31910 / BCRC 17059 / LMG 24140 / F1).